The following is a 472-amino-acid chain: Sulfate adenylyltransferase subunit 1 (472 aa).

The 218-residue stretch at 22–239 folds into the tr-type G domain; it reads KELLRFLTCG…TVPIAGDKNY (218 aa). The G1 stretch occupies residues 31–38; sequence GSVDDGKS. 31–38 is a GTP binding site; the sequence is GSVDDGKS. Residues 89-93 form a G2 region; that stretch reads GITID. The tract at residues 110–113 is G3; sequence DTPG. Residues 110–114 and 165–168 each bind GTP; these read DTPGH and NKMD. The interval 165–168 is G4; sequence NKMD. The segment at 202 to 204 is G5; the sequence is SAL.

This sequence belongs to the TRAFAC class translation factor GTPase superfamily. Classic translation factor GTPase family. CysN/NodQ subfamily. In terms of assembly, heterodimer composed of CysD, the smaller subunit, and CysN.

It catalyses the reaction sulfate + ATP + H(+) = adenosine 5'-phosphosulfate + diphosphate. It functions in the pathway sulfur metabolism; hydrogen sulfide biosynthesis; sulfite from sulfate: step 1/3. With CysD forms the ATP sulfurylase (ATPS) that catalyzes the adenylation of sulfate producing adenosine 5'-phosphosulfate (APS) and diphosphate, the first enzymatic step in sulfur assimilation pathway. APS synthesis involves the formation of a high-energy phosphoric-sulfuric acid anhydride bond driven by GTP hydrolysis by CysN coupled to ATP hydrolysis by CysD. This Cellvibrio japonicus (strain Ueda107) (Pseudomonas fluorescens subsp. cellulosa) protein is Sulfate adenylyltransferase subunit 1.